We begin with the raw amino-acid sequence, 357 residues long: Eukaryotic translation initiation factor 3 subunit F (357 aa).

A disordered region spans residues 1–82; it reads MATPAVPVSA…PAPALPGPAL (82 aa). Alanine 2 carries the N-acetylalanine modification. Residues 9 to 36 are compositionally biased toward pro residues; the sequence is SAPPATPTPVPAAAPASVPAPTPAPAAA. Over residues 37 to 74 the composition is skewed to low complexity; sequence PVPAAAPASSSDPAAAAAATAAPGQTPASAQAPAQTPA. Residue serine 46 is modified to Phosphoserine; by CDK11; in vitro. An MPN domain is found at 92–222; it reads VRLHPVILAS…IKAYVSTLMG (131 aa). N6-acetyllysine is present on lysine 238. Serine 258 bears the Phosphoserine mark.

It belongs to the eIF-3 subunit F family. Component of the eukaryotic translation initiation factor 3 (eIF-3) complex, which is composed of 13 subunits: EIF3A, EIF3B, EIF3C, EIF3D, EIF3E, EIF3F, EIF3G, EIF3H, EIF3I, EIF3J, EIF3K, EIF3L and EIF3M. The eIF-3 complex appears to include 3 stable modules: module A is composed of EIF3A, EIF3B, EIF3G and EIF3I; module B is composed of EIF3F, EIF3H, and EIF3M; and module C is composed of EIF3C, EIF3D, EIF3E, EIF3K and EIF3L. EIF3C of module C binds EIF3B of module A and EIF3H of module B, thereby linking the three modules. EIF3J is a labile subunit that binds to the eIF-3 complex via EIF3B. The eIF-3 complex interacts with RPS6KB1 under conditions of nutrient depletion. Mitogenic stimulation leads to binding and activation of a complex composed of MTOR and RPTOR, leading to phosphorylation and release of RPS6KB1 and binding of EIF4B to eIF-3. Interacts with RNF139; the interaction leads to protein translation inhibitions in a ubiquitination-dependent manner. Interacts with DTX1, the interaction is required for deubiquitinating activity towards NOTCH1. Phosphorylation is enhanced upon serum stimulation. Phosphorylated during apoptosis by caspase-processed CDK11.

It localises to the cytoplasm. It catalyses the reaction Thiol-dependent hydrolysis of ester, thioester, amide, peptide and isopeptide bonds formed by the C-terminal Gly of ubiquitin (a 76-residue protein attached to proteins as an intracellular targeting signal).. Component of the eukaryotic translation initiation factor 3 (eIF-3) complex, which is required for several steps in the initiation of protein synthesis. The eIF-3 complex associates with the 40S ribosome and facilitates the recruitment of eIF-1, eIF-1A, eIF-2:GTP:methionyl-tRNAi and eIF-5 to form the 43S pre-initiation complex (43S PIC). The eIF-3 complex stimulates mRNA recruitment to the 43S PIC and scanning of the mRNA for AUG recognition. The eIF-3 complex is also required for disassembly and recycling of post-termination ribosomal complexes and subsequently prevents premature joining of the 40S and 60S ribosomal subunits prior to initiation. The eIF-3 complex specifically targets and initiates translation of a subset of mRNAs involved in cell proliferation, including cell cycling, differentiation and apoptosis, and uses different modes of RNA stem-loop binding to exert either translational activation or repression. Functionally, deubiquitinates activated NOTCH1, promoting its nuclear import, thereby acting as a positive regulator of Notch signaling. The protein is Eukaryotic translation initiation factor 3 subunit F of Homo sapiens (Human).